Here is a 734-residue protein sequence, read N- to C-terminus: MELRFPRFSQGLAQDPTTRRIWFGIATAHDFESHDDITEERLYQNIFASHFGQLAIIFLWTSGNLFHVAWQGNFESWIQDPLHVRPIAHAIWDPHFGQPAVEAFTRGGAAGPVNIAYSGVYQWWYTIGLRTNEDLYTGALFLLFLSTLSLIGGWLHLQPKWKPSLSWFKNAESRLNHHLSGLFGVSSLAWTGHLVHVAIPASRGEYVRWNNFLDVLPYPQGLGPLLTGQWNLYAQNPDSSNHLFGTTQGAGTAILTLLGGFHPQTQSLWLTDIAHHHLAIAFIFLIAGHMYRTNFGIGHSIKDLLEAHTPPGGRLGRGHKGLYDTINNSIHFQLGLALASLGVITSLVAQHMYSLPSYAFIAQDFTTQAALYTHHQYIAGFIMTGAFAHGAIFFIRDYNPEQNEDNVLARMLDHKEAIISHLSWASLFLGFHTLGLYVHNDVMLAFGTPEKQILIEPIFAQWIQSAHGKTTYGFDILLSSTSGPAFNAGRTLWLPGWLNAVNENSNSLFLTIGPGDFLVHHAIALGLHTTTLILVKGALDARGSKLMPDKKDFGYSFPCDGPGRGGTCDISAWDAFYLAVFWMLNTIGWVTFYWHWKHITLWQGNVSQFNESSTYLMGWLRDYLWLNSSQLINGYNPFGMNSLSVWAWMFLFGHLVWATGFMFLISWRGYWQELIETLAWAHERTPLANLIRWRDKPVALSIVQARLVGLAHFSVGYIFTYAAFLIASTSGKFG.

Transmembrane regions (helical) follow at residues 46–69, 135–158, 175–199, 273–291, 330–353, 369–395, 417–439, and 517–535; these read IFAS…FHVA, LYTG…LHLQ, LNHH…HVAI, IAHH…GHMY, IHFQ…QHMY, AALY…IFFI, AIIS…LYVH, and FLVH…LILV. [4Fe-4S] cluster-binding residues include Cys559 and Cys568. Transmembrane regions (helical) follow at residues 575–596 and 643–665; these read AFYL…YWHW and LSVW…MFLI. Positions 654, 662, and 670 each coordinate chlorophyll a. Phylloquinone is bound at residue Trp671. The chain crosses the membrane as a helical span at residues 707-727; the sequence is LVGLAHFSVGYIFTYAAFLIA.

Belongs to the PsaA/PsaB family. In terms of assembly, the PsaA/B heterodimer binds the P700 chlorophyll special pair and subsequent electron acceptors. PSI consists of a core antenna complex that captures photons, and an electron transfer chain that converts photonic excitation into a charge separation. The eukaryotic PSI reaction center is composed of at least 11 subunits. The cofactor is P700 is a chlorophyll a/chlorophyll a' dimer, A0 is one or more chlorophyll a, A1 is one or both phylloquinones and FX is a shared 4Fe-4S iron-sulfur center..

It localises to the plastid. Its subcellular location is the chloroplast thylakoid membrane. The catalysed reaction is reduced [plastocyanin] + hnu + oxidized [2Fe-2S]-[ferredoxin] = oxidized [plastocyanin] + reduced [2Fe-2S]-[ferredoxin]. Its function is as follows. PsaA and PsaB bind P700, the primary electron donor of photosystem I (PSI), as well as the electron acceptors A0, A1 and FX. PSI is a plastocyanin-ferredoxin oxidoreductase, converting photonic excitation into a charge separation, which transfers an electron from the donor P700 chlorophyll pair to the spectroscopically characterized acceptors A0, A1, FX, FA and FB in turn. Oxidized P700 is reduced on the lumenal side of the thylakoid membrane by plastocyanin. This is Photosystem I P700 chlorophyll a apoprotein A2 from Oryza sativa (Rice).